Consider the following 417-residue polypeptide: Echinulin prenyltransferase 1 (417 aa).

Dimethylallyl diphosphate-binding residues include Arg-90, Lys-179, Tyr-181, Lys-248, Tyr-250, Tyr-333, Tyr-398, and Tyr-402.

The protein belongs to the tryptophan dimethylallyltransferase family.

It catalyses the reaction cyclo(L-tryptophyl-L-alanyl) + dimethylallyl diphosphate = preechinulin + diphosphate. Its pathway is secondary metabolite biosynthesis. It participates in alkaloid biosynthesis. Prenyltransferase; part of the gene cluster that mediates the biosynthesis of echinulin family alkaloid. The pathway begins with the biosynthesis of the cyclic dipeptide cyclo-L-Trp-L-Ala (cyclo-TA) by the NRPS echPS via condensation of L-alanine and L-tryptophan. The prenyltransferase echPT1 then catalyzes the first prenylation step, a reverse prenylation reaction at C2, to yield preechinulin. Preechinulin is the substrate of the cytochrome P450 monooxygenase echP450 that catalyzes the formation of the double bond between C10 and C11 to produce neoechulin A. The unique prenyltransferase echPT2 functions as a competitive enzyme with echP450 for preechinulin metabolization and uses preechinulin for effective regiospecific prenylations. Preechinulin is prenylated by echPT2 at C5 or C7. C7-prenylation leads to accumulation of tardioxopiperazine B without further modification by echPT2. In contrast, the C5-prenylated tardioxopiperazine A can be prenylated again by echPT2, predominantly at C7 to form echinulin or less frequently at C4 to give variecolorin L. EchPT2 also accepts neoechilunin A to produce varlecolorin G (prenylation at C5) or isoechinulin A (prenylation at C7). EchPT2 further converts isoechinulin A into dehydroechinulin. Moreover, a yet unidentified enzyme can also convert neoechilunin A into neoechilunin B by introducing a double bond between positions C14 and C17 and thus provides a further substrate to echPT2 for C5 and C7 prenylation. The sequence is that of Echinulin prenyltransferase 1 from Aspergillus ruber (Eurotium rubrum).